The following is a 239-amino-acid chain: Sugar fermentation stimulation protein homolog (239 aa).

Belongs to the SfsA family.

This chain is Sugar fermentation stimulation protein homolog, found in Cyanothece sp. (strain PCC 7425 / ATCC 29141).